Reading from the N-terminus, the 748-residue chain is Pleckstrin homology domain-containing family M member 3 (748 aa).

Disordered regions lie at residues 88-107 (HAKEQNESTKRTYSDDPLLS) and 129-187 (NDSL…RNKN). Basic and acidic residues-rich tracts occupy residues 129–140 (NDSLDHLEDAPK) and 148–159 (SRSDVSHIDWKN). A compositionally biased stretch (polar residues) spans 167 to 180 (QRSSSQGMHCTSPF). PH domains follow at residues 200 to 297 (NILK…EAIC) and 348 to 443 (NIIK…SAAN). The segment at 656–709 (SHVYSCSLCSQKGFICEICNNGEILYPFEENSTSRCENCGAVFHSDCKVRTVPC) adopts a Phorbol-ester/DAG-type zinc-finger fold.

Its subcellular location is the cytoplasm. The protein resides in the golgi apparatus. The protein localises to the cell membrane. May play a role during muscle differentiation. In Xenopus laevis (African clawed frog), this protein is Pleckstrin homology domain-containing family M member 3 (plekhm3).